We begin with the raw amino-acid sequence, 196 residues long: Large ribosomal subunit protein uL6 (196 aa).

This sequence belongs to the universal ribosomal protein uL6 family. Part of the 50S ribosomal subunit.

Its function is as follows. This protein binds to the 23S rRNA, and is important in its secondary structure. It is located near the subunit interface in the base of the L7/L12 stalk, and near the tRNA binding site of the peptidyltransferase center. The sequence is that of Large ribosomal subunit protein uL6 from Pyrobaculum aerophilum (strain ATCC 51768 / DSM 7523 / JCM 9630 / CIP 104966 / NBRC 100827 / IM2).